Consider the following 1067-residue polypeptide: Mediator of RNA polymerase II transcription subunit 5 (1067 aa).

It belongs to the Mediator complex subunit 5 family. Component of the Mediator complex.

Its subcellular location is the nucleus. In terms of biological role, component of the Mediator complex, a coactivator involved in the regulated transcription of nearly all RNA polymerase II-dependent genes. Mediator functions as a bridge to convey information from gene-specific regulatory proteins to the basal RNA polymerase II transcription machinery. Mediator is recruited to promoters by direct interactions with regulatory proteins and serves as a scaffold for the assembly of a functional preinitiation complex with RNA polymerase II and the general transcription factors. This chain is Mediator of RNA polymerase II transcription subunit 5 (NUT1), found in Kluyveromyces lactis (strain ATCC 8585 / CBS 2359 / DSM 70799 / NBRC 1267 / NRRL Y-1140 / WM37) (Yeast).